A 258-amino-acid chain; its full sequence is Tetratricopeptide repeat protein 33 (258 aa).

3 TPR repeats span residues 59 to 92 (SKRL…TPGD), 93 to 126 (AALY…NPHF), and 127 to 160 (VEAW…CPAN). Positions 231-258 (SASGSENLSDRKEDKVETNDSKEFIKAR) are disordered. A compositionally biased stretch (basic and acidic residues) spans 238 to 258 (LSDRKEDKVETNDSKEFIKAR).

In Xenopus laevis (African clawed frog), this protein is Tetratricopeptide repeat protein 33 (ttc33).